The following is a 257-amino-acid chain: MLNNCVVLIRKSVLLSPNLKYIRNMSIDIGGMRIKYKEKDETFLEKHLVSKEPFGQFKSWFEEACARKEILEPNAMCLATVSQEGFPSARFVLCKGYGKEGFKFYTNYGSKKAKDIEGNPNVAATFYWEILNRSVRIEGRVEKLSEDDSTKYFHTRPVVSQIAACASYQSTPIESRDVLCEREKLLEQQYMIPGKEVPKPSYWGGYLLIPRSVEFWQGQRDRLHDRIKFRRPNKGEVSDERLLHEGEDGWVFERLSP.

Substrate is bound at residue 33 to 36 (RIKY). An FMN-binding site is contributed by 90–93 (RFVL). Lysine 95 is a pyridoxal 5'-phosphate binding site. Residues 105 to 106 (YT) and lysine 112 each bind FMN. Pyridoxal 5'-phosphate-binding residues include tyrosine 152, arginine 156, and serine 160. Residues 169–170 (QS) and tryptophan 216 each bind FMN. Substrate is bound at residue 222 to 224 (RLH). Residue arginine 226 coordinates FMN.

Belongs to the pyridoxamine 5'-phosphate oxidase family. In terms of assembly, homodimer. The cofactor is FMN. Expressed in silk gland and fat body of the larva.

It catalyses the reaction pyridoxamine 5'-phosphate + O2 + H2O = pyridoxal 5'-phosphate + H2O2 + NH4(+). The catalysed reaction is pyridoxine 5'-phosphate + O2 = pyridoxal 5'-phosphate + H2O2. It functions in the pathway cofactor metabolism; pyridoxal 5'-phosphate salvage; pyridoxal 5'-phosphate from pyridoxamine 5'-phosphate: step 1/1. The protein operates within cofactor metabolism; pyridoxal 5'-phosphate salvage; pyridoxal 5'-phosphate from pyridoxine 5'-phosphate: step 1/1. In terms of biological role, catalyzes the oxidation of either pyridoxine 5'-phosphate (PNP) or pyridoxamine 5'-phosphate (PMP) into pyridoxal 5'-phosphate (PLP). In Bombyx mori (Silk moth), this protein is Pyridoxine/pyridoxamine 5'-phosphate oxidase.